The following is a 1188-amino-acid chain: AT-rich interactive domain-containing protein 5B (1188 aa).

Lysine 130 participates in a covalent cross-link: Glycyl lysine isopeptide (Lys-Gly) (interchain with G-Cter in SUMO2). Residues 251–278 are disordered; that stretch reads RPRKKKTCPQRRDSFSGSKDPNNNCDGK. At serine 264 the chain carries Phosphoserine. Positions 265 to 275 are enriched in polar residues; that stretch reads FSGSKDPNNNC. One can recognise an ARID domain in the interval 319–411; sequence RADEQAFLVA…LILPYERFIK (93 aa). Lysine 337 carries the N6,N6-dimethyllysine modification. Positions 413–614 are disordered; sequence EEDKPLPPIK…LTSQNEAEEE (202 aa). Basic and acidic residues-rich tracts occupy residues 445 to 459, 470 to 484, 493 to 504, and 526 to 535; these read IKQEMAKNKKEKENT, SEQRKEEETLNHKSA, VKGKPEGHKDLG, and SEKEAEEMGD. A Glycyl lysine isopeptide (Lys-Gly) (interchain with G-Cter in SUMO2) cross-link involves residue lysine 446. Residues lysine 494 and lysine 496 each participate in a glycyl lysine isopeptide (Lys-Gly) (interchain with G-Cter in SUMO2) cross-link. Polar residues predominate over residues 594-609; that stretch reads PFSSFSATKPPLTSQN. Residues lysine 767, lysine 774, lysine 803, lysine 810, lysine 893, lysine 916, lysine 920, and lysine 935 each participate in a glycyl lysine isopeptide (Lys-Gly) (interchain with G-Cter in SUMO2) cross-link. The disordered stretch occupies residues 958–978; the sequence is SPMTMSGPKKYPESLARSGKP. Glycyl lysine isopeptide (Lys-Gly) (interchain with G-Cter in SUMO2) cross-links involve residues lysine 988, lysine 1000, and lysine 1013. Positions 1030–1066 are disordered; that stretch reads AVSPLDPAKEASGKEKASEQESEGNKGAYGGHSGAAS. A Phosphoserine modification is found at serine 1032. Over residues 1036–1048 the composition is skewed to basic and acidic residues; it reads PAKEASGKEKASE. Residues lysine 1055 and lysine 1070 each participate in a glycyl lysine isopeptide (Lys-Gly) (interchain with G-Cter in SUMO2) cross-link. A Phosphoserine modification is found at serine 1133.

The protein belongs to the ARID5B family. Methylation at Lys-337 prevents DNA-binding. Demethylation by PHF2 promotes recruitment of the PHF2-ARID5B complex to promoters. Widely expressed. Expressed in lung, heart, small intestine, kidney, muscle and brain. Also expressed in spleen, thymus, endocrine organs and in uterus and testis.

Its subcellular location is the nucleus. In terms of biological role, transcription coactivator that binds to the 5'-AATA[CT]-3' core sequence and plays a key role in adipogenesis and liver development. Acts by forming a complex with phosphorylated PHF2, which mediates demethylation at Lys-337, leading to target the PHF2-ARID5B complex to target promoters, where PHF2 mediates demethylation of dimethylated 'Lys-9' of histone H3 (H3K9me2), followed by transcription activation of target genes. The PHF2-ARID5B complex acts as a coactivator of HNF4A in liver. Required for adipogenesis: regulates triglyceride metabolism in adipocytes by regulating expression of adipogenic genes. Overexpression leads to induction of smooth muscle marker genes, suggesting that it may also act as a regulator of smooth muscle cell differentiation and proliferation. The polypeptide is AT-rich interactive domain-containing protein 5B (Arid5b) (Mus musculus (Mouse)).